Reading from the N-terminus, the 261-residue chain is Phosphatidylglycerol--prolipoprotein diacylglyceryl transferase (261 aa).

4 helical membrane-spanning segments follow: residues Phe-17 to Gly-37, Leu-59 to Tyr-79, Ile-94 to Trp-114, and Thr-121 to Gly-141. An a 1,2-diacyl-sn-glycero-3-phospho-(1'-sn-glycerol)-binding site is contributed by Arg-142. Helical transmembrane passes span Pro-174 to Tyr-194 and Phe-228 to Ile-248.

It belongs to the Lgt family.

It localises to the cell inner membrane. The catalysed reaction is L-cysteinyl-[prolipoprotein] + a 1,2-diacyl-sn-glycero-3-phospho-(1'-sn-glycerol) = an S-1,2-diacyl-sn-glyceryl-L-cysteinyl-[prolipoprotein] + sn-glycerol 1-phosphate + H(+). It participates in protein modification; lipoprotein biosynthesis (diacylglyceryl transfer). Catalyzes the transfer of the diacylglyceryl group from phosphatidylglycerol to the sulfhydryl group of the N-terminal cysteine of a prolipoprotein, the first step in the formation of mature lipoproteins. This is Phosphatidylglycerol--prolipoprotein diacylglyceryl transferase from Polynucleobacter asymbioticus (strain DSM 18221 / CIP 109841 / QLW-P1DMWA-1) (Polynucleobacter necessarius subsp. asymbioticus).